The sequence spans 469 residues: 2-amino-4-ketopentanoate thiolase beta subunit (469 aa).

Lys-102 bears the N6-(pyridoxal phosphate)lysine mark. Pyridoxal 5'-phosphate-binding positions include Asn-128 and 238-242 (AGGGN).

It belongs to the threonine synthase family. In terms of assembly, heterodimer with OrtA. The cofactor is pyridoxal 5'-phosphate.

It catalyses the reaction D-alanine + acetyl-CoA = (2R)-2-amino-4-oxopentanoate + CoA. With respect to regulation, completely inhibited by p-chloromercuribenzoate (p-ClHgBzO) and acetyl-CoA, and partially inhibited by N-ethylmaleimide. In terms of biological role, involved in the ornithine fermentation pathway. Catalyzes the thiolytic cleavage of 2-amino-4-ketopentanoate (AKP) with coenzyme A (CoA) to form acetyl-CoA and alanine. It is strictly specific for AKP. The polypeptide is 2-amino-4-ketopentanoate thiolase beta subunit (Acetoanaerobium sticklandii (strain ATCC 12662 / DSM 519 / JCM 1433 / CCUG 9281 / NCIMB 10654 / HF) (Clostridium sticklandii)).